Here is a 205-residue protein sequence, read N- to C-terminus: Urease accessory protein UreE (205 aa).

Residues 171-205 (AHEAHPHAHSHAGGHGHVHSGHGHGGKHGEHDAES) form a disordered region. Positions 177-196 (HAHSHAGGHGHVHSGHGHGG) are enriched in basic residues.

Belongs to the UreE family.

It localises to the cytoplasm. Functionally, involved in urease metallocenter assembly. Binds nickel. Probably functions as a nickel donor during metallocenter assembly. The sequence is that of Urease accessory protein UreE from Bordetella bronchiseptica (strain ATCC BAA-588 / NCTC 13252 / RB50) (Alcaligenes bronchisepticus).